Consider the following 257-residue polypeptide: Tryptophan synthase alpha chain (257 aa).

Residues E46 and D57 each act as proton acceptor in the active site.

This sequence belongs to the TrpA family. As to quaternary structure, tetramer of two alpha and two beta chains.

The catalysed reaction is (1S,2R)-1-C-(indol-3-yl)glycerol 3-phosphate + L-serine = D-glyceraldehyde 3-phosphate + L-tryptophan + H2O. The protein operates within amino-acid biosynthesis; L-tryptophan biosynthesis; L-tryptophan from chorismate: step 5/5. In terms of biological role, the alpha subunit is responsible for the aldol cleavage of indoleglycerol phosphate to indole and glyceraldehyde 3-phosphate. The polypeptide is Tryptophan synthase alpha chain (Parabacteroides distasonis (strain ATCC 8503 / DSM 20701 / CIP 104284 / JCM 5825 / NCTC 11152)).